The following is a 1343-amino-acid chain: DNA-directed RNA polymerase subunit beta (1343 aa).

Belongs to the RNA polymerase beta chain family. In terms of assembly, the RNAP catalytic core consists of 2 alpha, 1 beta, 1 beta' and 1 omega subunit. When a sigma factor is associated with the core the holoenzyme is formed, which can initiate transcription.

It catalyses the reaction RNA(n) + a ribonucleoside 5'-triphosphate = RNA(n+1) + diphosphate. Its function is as follows. DNA-dependent RNA polymerase catalyzes the transcription of DNA into RNA using the four ribonucleoside triphosphates as substrates. This chain is DNA-directed RNA polymerase subunit beta, found in Shewanella violacea.